A 163-amino-acid chain; its full sequence is Cyanate hydratase (163 aa).

Active-site residues include Arg103, Glu106, and Ser129.

This sequence belongs to the cyanase family.

It catalyses the reaction cyanate + hydrogencarbonate + 3 H(+) = NH4(+) + 2 CO2. Functionally, catalyzes the reaction of cyanate with bicarbonate to produce ammonia and carbon dioxide. The chain is Cyanate hydratase from Ajellomyces dermatitidis (strain ER-3 / ATCC MYA-2586) (Blastomyces dermatitidis).